The sequence spans 176 residues: ATP synthase subunit b (176 aa).

The helical transmembrane segment at 26–45 (VINLAIIIGVLVYFGRGLLG) threads the bilayer.

The protein belongs to the ATPase B chain family. F-type ATPases have 2 components, F(1) - the catalytic core - and F(0) - the membrane proton channel. F(1) has five subunits: alpha(3), beta(3), gamma(1), delta(1), epsilon(1). F(0) has four main subunits: a(1), b(1), b'(1) and c(10-14). The alpha and beta chains form an alternating ring which encloses part of the gamma chain. F(1) is attached to F(0) by a central stalk formed by the gamma and epsilon chains, while a peripheral stalk is formed by the delta, b and b' chains.

It localises to the cellular thylakoid membrane. F(1)F(0) ATP synthase produces ATP from ADP in the presence of a proton or sodium gradient. F-type ATPases consist of two structural domains, F(1) containing the extramembraneous catalytic core and F(0) containing the membrane proton channel, linked together by a central stalk and a peripheral stalk. During catalysis, ATP synthesis in the catalytic domain of F(1) is coupled via a rotary mechanism of the central stalk subunits to proton translocation. In terms of biological role, component of the F(0) channel, it forms part of the peripheral stalk, linking F(1) to F(0). This chain is ATP synthase subunit b, found in Synechococcus sp. (strain PCC 6716).